The sequence spans 170 residues: uncharacterized protein (170 aa).

The disordered stretch occupies residues 35–57; it reads EEVMPATAPSTDPAVPKDAQEAD.

This is an uncharacterized protein from Candida tsukubaensis (Yeast).